The sequence spans 234 residues: uncharacterized protein (234 aa).

Helical transmembrane passes span 22 to 42 (TFLN…IPLI), 59 to 79 (INWA…AYLI), 154 to 174 (FWIF…IFFC), and 186 to 206 (LLSL…IFAL).

It localises to the cell membrane. This is an uncharacterized protein from Escherichia coli (strain K12).